Reading from the N-terminus, the 154-residue chain is SsrA-binding protein (154 aa).

The protein belongs to the SmpB family.

Its subcellular location is the cytoplasm. Its function is as follows. Required for rescue of stalled ribosomes mediated by trans-translation. Binds to transfer-messenger RNA (tmRNA), required for stable association of tmRNA with ribosomes. tmRNA and SmpB together mimic tRNA shape, replacing the anticodon stem-loop with SmpB. tmRNA is encoded by the ssrA gene; the 2 termini fold to resemble tRNA(Ala) and it encodes a 'tag peptide', a short internal open reading frame. During trans-translation Ala-aminoacylated tmRNA acts like a tRNA, entering the A-site of stalled ribosomes, displacing the stalled mRNA. The ribosome then switches to translate the ORF on the tmRNA; the nascent peptide is terminated with the 'tag peptide' encoded by the tmRNA and targeted for degradation. The ribosome is freed to recommence translation, which seems to be the essential function of trans-translation. The sequence is that of SsrA-binding protein from Streptococcus thermophilus (strain CNRZ 1066).